We begin with the raw amino-acid sequence, 391 residues long: D-alanine--D-alanine ligase (391 aa).

Residues 1–24 are disordered; sequence MSSENLPQSPERAESPQAPRRKPR. Residues 171-381 form the ATP-grasp domain; it reads KRVFLSFGLP…YPELVDRLIQ (211 aa). 207–262 serves as a coordination point for ATP; it reads AGEHGWPLFIKPARGGSSMGITKVDSVEGLDAAIEEARRHDPKFLVESLLRGREIE. Positions 335, 348, and 350 each coordinate Mg(2+).

The protein belongs to the D-alanine--D-alanine ligase family. It depends on Mg(2+) as a cofactor. Mn(2+) serves as cofactor.

It is found in the cytoplasm. It catalyses the reaction 2 D-alanine + ATP = D-alanyl-D-alanine + ADP + phosphate + H(+). It functions in the pathway cell wall biogenesis; peptidoglycan biosynthesis. Its function is as follows. Cell wall formation. The protein is D-alanine--D-alanine ligase of Streptomyces griseus subsp. griseus (strain JCM 4626 / CBS 651.72 / NBRC 13350 / KCC S-0626 / ISP 5235).